The primary structure comprises 285 residues: Shikimate dehydrogenase (NADP(+)) (285 aa).

Shikimate-binding positions include 21-23 (SRS) and Thr68. Lys72 functions as the Proton acceptor in the catalytic mechanism. NADP(+) is bound at residue Glu83. Residues Asn92 and Asp107 each contribute to the shikimate site. Residues 132-136 (GAGGS), 156-161 (NRTMER), and Leu221 each bind NADP(+). Tyr223 contacts shikimate. Gly244 serves as a coordination point for NADP(+).

Belongs to the shikimate dehydrogenase family. Homodimer.

It carries out the reaction shikimate + NADP(+) = 3-dehydroshikimate + NADPH + H(+). The protein operates within metabolic intermediate biosynthesis; chorismate biosynthesis; chorismate from D-erythrose 4-phosphate and phosphoenolpyruvate: step 4/7. Functionally, involved in the biosynthesis of the chorismate, which leads to the biosynthesis of aromatic amino acids. Catalyzes the reversible NADPH linked reduction of 3-dehydroshikimate (DHSA) to yield shikimate (SA). The chain is Shikimate dehydrogenase (NADP(+)) from Nitrobacter hamburgensis (strain DSM 10229 / NCIMB 13809 / X14).